We begin with the raw amino-acid sequence, 208 residues long: Thymidylate kinase (208 aa).

10–17 (GGEGVGKS) is an ATP binding site.

Belongs to the thymidylate kinase family.

The catalysed reaction is dTMP + ATP = dTDP + ADP. Functionally, phosphorylation of dTMP to form dTDP in both de novo and salvage pathways of dTTP synthesis. This is Thymidylate kinase from Rhizorhabdus wittichii (strain DSM 6014 / CCUG 31198 / JCM 15750 / NBRC 105917 / EY 4224 / RW1) (Sphingomonas wittichii).